A 403-amino-acid chain; its full sequence is Probable tRNA sulfurtransferase (403 aa).

The THUMP domain maps to 60-165 (QLVEERLKPI…KEGVFLSCRT (106 aa)). Residues 183–184 (ML), 208–209 (HF), arginine 265, glycine 287, and glutamine 296 each bind ATP.

This sequence belongs to the ThiI family.

Its subcellular location is the cytoplasm. The catalysed reaction is [ThiI sulfur-carrier protein]-S-sulfanyl-L-cysteine + a uridine in tRNA + 2 reduced [2Fe-2S]-[ferredoxin] + ATP + H(+) = [ThiI sulfur-carrier protein]-L-cysteine + a 4-thiouridine in tRNA + 2 oxidized [2Fe-2S]-[ferredoxin] + AMP + diphosphate. It carries out the reaction [ThiS sulfur-carrier protein]-C-terminal Gly-Gly-AMP + S-sulfanyl-L-cysteinyl-[cysteine desulfurase] + AH2 = [ThiS sulfur-carrier protein]-C-terminal-Gly-aminoethanethioate + L-cysteinyl-[cysteine desulfurase] + A + AMP + 2 H(+). It functions in the pathway cofactor biosynthesis; thiamine diphosphate biosynthesis. Functionally, catalyzes the ATP-dependent transfer of a sulfur to tRNA to produce 4-thiouridine in position 8 of tRNAs, which functions as a near-UV photosensor. Also catalyzes the transfer of sulfur to the sulfur carrier protein ThiS, forming ThiS-thiocarboxylate. This is a step in the synthesis of thiazole, in the thiamine biosynthesis pathway. The sulfur is donated as persulfide by IscS. This Listeria monocytogenes serotype 4b (strain CLIP80459) protein is Probable tRNA sulfurtransferase.